The sequence spans 718 residues: Sodium/myo-inositol cotransporter (718 aa).

At 1–9 (MRAVLETAD) the chain is on the extracellular side. The chain crosses the membrane as a helical span at residues 10–29 (IAIVALYFILVMCIGFFAMW). At 30–38 (KSNRSTVSG) the chain is on the cytoplasmic side. Residues 39 to 57 (YFLAGRSMTWVAIGASLFV) form a helical membrane-spanning segment. Over 58–86 (SNIGSEHFIGLAGSGAASGFAVGAWEFNA) the chain is Extracellular. The helical transmembrane segment at 87–110 (LLLLQLLGWVFIPIYIRSGVYTMP) threads the bilayer. The Cytoplasmic portion of the chain corresponds to 111 to 123 (EYLSKRFGGHRIQ). Residues 124-144 (VYFAALSLILYIFTKLSVDLY) traverse the membrane as a helical segment. The Extracellular portion of the chain corresponds to 145-157 (SGALFIQESLGWN). A helical transmembrane segment spans residues 158 to 183 (LYVSVILLIGMTALLTVTGGLVAVIY). Residues 184–186 (TDT) lie on the Cytoplasmic side of the membrane. Residues 187 to 205 (LQALLMIVGALTLMIISMM) form a helical membrane-spanning segment. The Extracellular portion of the chain corresponds to 206–303 (EIGGFEEVKR…HAKGSTLMAG (98 aa)). Residue asparagine 232 is glycosylated (N-linked (GlcNAc...) asparagine). Residues 304-324 (FLKLLPMFIIVVPGMISRILF) form a helical membrane-spanning segment. The Cytoplasmic segment spans residues 325–353 (ADDIACINPEHCMQVCGSRAGCSNIAYPR). A helical transmembrane segment spans residues 354–376 (LVMKLVPVGLRGLMMAVMIAALM). Residues 377-406 (SDLDSIFNSASTIFTLDVYKLIRRSASSRE) are Extracellular-facing. Residues 407-430 (LMIVGRIFVAFMVVISIAWVPIIV) traverse the membrane as a helical segment. Residues 431 to 443 (EMQGGQMYLYIQE) lie on the Cytoplasmic side of the membrane. A helical transmembrane segment spans residues 444 to 462 (VADYLTPPVAALFLLAIFW). Residues 463 to 510 (KRCNEQGAFYGGMAGFVLGAVRLTLAFAYRAPECDQPDNRPGFIKDIH) are Extracellular-facing. Residues 511–532 (YMYVATALFWVTGLITVIVSLL) form a helical membrane-spanning segment. At 533 to 695 (TPPPTKEQIR…QMLEEPPQVK (163 aa)) the chain is on the cytoplasmic side. Phosphoserine is present on residues serine 594 and serine 632. The helical transmembrane segment at 696 to 716 (LILNIGLFAVCSLGIFMFVYF) threads the bilayer. Residues 717-718 (SL) lie on the Extracellular side of the membrane.

This sequence belongs to the sodium:solute symporter (SSF) (TC 2.A.21) family. As to quaternary structure, interacts with KCNQ2 (via the pore module). Interacts with KCNQ1; this interaction is direct. Forms coregulatory complexes with ion channels KCNQ2-KCNQ3 and KCNQ1-KCNE2. As to expression, kidney cortex and medulla.

Its subcellular location is the apical cell membrane. The protein resides in the basolateral cell membrane. It catalyses the reaction myo-inositol(out) + 2 Na(+)(out) = myo-inositol(in) + 2 Na(+)(in). The enzyme catalyses scyllo-inositol(out) + 2 Na(+)(out) = scyllo-inositol(in) + 2 Na(+)(in). With respect to regulation, inhibited by phlorizin and phloretin. Electrogenic Na(+)-coupled sugar symporter that actively transports myo-inositol and its stereoisomer scyllo-inositol across the plasma membrane, with a Na(+) to sugar coupling ratio of 2:1. Maintains myo-inositol concentration gradient that defines cell volume and fluid balance during osmotic stress, in particular in the fetoplacental unit and central nervous system. Forms coregulatory complexes with voltage-gated K(+) ion channels, allosterically altering ion selectivity, voltage dependence and gating kinetics of the channel. In turn, K(+) efflux through the channel forms a local electrical gradient that modulates electrogenic Na(+)-coupled myo-inositol influx through the transporter. Associates with KCNQ1-KCNE2 channel in the apical membrane of choroid plexus epithelium and regulates the myo-inositol gradient between blood and cerebrospinal fluid with an impact on neuron excitability. Associates with KCNQ2-KCNQ3 channel altering ion selectivity, increasing Na(+) and Cs(+) permeation relative to K(+) permeation. Provides myo-inositol precursor for biosynthesis of phosphoinositides such as PI(4,5)P2, thus indirectly affecting the activity of phosphoinositide-dependent ion channels and Ca(2+) signaling upon osmotic stress. Has very low affinity for sugars such as L-fucose and L-xylose, with an affinity about three orders of magnitude lower than myo-inositol. The polypeptide is Sodium/myo-inositol cotransporter (SLC5A3) (Canis lupus familiaris (Dog)).